The following is a 143-amino-acid chain: Hemoglobin subunit alpha (143 aa).

The residue at position 1 (serine 1) is an N-acetylserine. Residues 1 to 143 form the Globin domain; that stretch reads SLSATDKARV…LALALSEKYR (143 aa). Histidine 60 contacts O2. Residue histidine 89 coordinates heme b.

Belongs to the globin family. As to quaternary structure, heterotetramer of two alpha chains and two beta chains. As to expression, red blood cells.

Its function is as follows. Involved in oxygen transport from gills to the various peripheral tissues. This Leiostomus xanthurus (Spot) protein is Hemoglobin subunit alpha (hba).